The following is a 237-amino-acid chain: Large ribosomal subunit protein uL1 (237 aa).

The protein belongs to the universal ribosomal protein uL1 family. As to quaternary structure, part of the 50S ribosomal subunit.

In terms of biological role, binds directly to 23S rRNA. The L1 stalk is quite mobile in the ribosome, and is involved in E site tRNA release. Its function is as follows. Protein L1 is also a translational repressor protein, it controls the translation of the L11 operon by binding to its mRNA. This Corynebacterium kroppenstedtii (strain DSM 44385 / JCM 11950 / CIP 105744 / CCUG 35717) protein is Large ribosomal subunit protein uL1.